Consider the following 88-residue polypeptide: Elongation factor 1-beta (88 aa).

It belongs to the EF-1-beta/EF-1-delta family.

Functionally, promotes the exchange of GDP for GTP in EF-1-alpha/GDP, thus allowing the regeneration of EF-1-alpha/GTP that could then be used to form the ternary complex EF-1-alpha/GTP/AAtRNA. The chain is Elongation factor 1-beta from Natronomonas pharaonis (strain ATCC 35678 / DSM 2160 / CIP 103997 / JCM 8858 / NBRC 14720 / NCIMB 2260 / Gabara) (Halobacterium pharaonis).